A 560-amino-acid polypeptide reads, in one-letter code: 2-succinylbenzoate--CoA ligase, chloroplastic/peroxisomal (560 aa).

The N-terminal 15 residues, 1-15 (MANHSRPHICQCLTR), are a transit peptide targeting the chloroplast. Transmembrane regions (helical) follow at residues 69 to 89 (LFLEWLLAVALVGGVVAPLNY), 189 to 209 (GVTISHLAFITQSLAKIAIAG), and 225 to 245 (IGGLSSAMAMLMVGACHVLLP). The Microbody targeting signal signature appears at 558-560 (SSL).

The protein belongs to the ATP-dependent AMP-binding enzyme family. MenE subfamily. High expression in young leaves and flowers. Not expressed in roots.

It localises to the plastid. The protein resides in the chloroplast membrane. The protein localises to the peroxisome membrane. The enzyme catalyses 2-succinylbenzoate + ATP + CoA = 2-succinylbenzoyl-CoA + AMP + diphosphate. Its function is as follows. Involved in the biosynthesis of phylloquinone (vitamin K1). Converts 2-succinylbenzoate (OSB) to 2-succinylbenzoyl-CoA (OSB-CoA). The chain is 2-succinylbenzoate--CoA ligase, chloroplastic/peroxisomal (AAE14) from Arabidopsis thaliana (Mouse-ear cress).